We begin with the raw amino-acid sequence, 152 residues long: Cell division protein SepF (152 aa).

Belongs to the SepF family. As to quaternary structure, homodimer. Interacts with FtsZ.

It localises to the cytoplasm. Functionally, cell division protein that is part of the divisome complex and is recruited early to the Z-ring. Probably stimulates Z-ring formation, perhaps through the cross-linking of FtsZ protofilaments. Its function overlaps with FtsA. This Clostridioides difficile (strain 630) (Peptoclostridium difficile) protein is Cell division protein SepF.